The sequence spans 994 residues: Chloride channel protein E (994 aa).

Positions 1–33 are disordered; it reads MTRKENEESESLSSSSSPIDNSNNNNNNNNHSI. The Cytoplasmic portion of the chain corresponds to 1-163; that stretch reads MTRKENEESE…HWLGKERIST (163 aa). Residues 11–32 are compositionally biased toward low complexity; sequence SLSSSSSPIDNSNNNNNNNNHS. 11 helical membrane passes run 164 to 184, 227 to 247, 271 to 291, 300 to 320, 334 to 354, 362 to 382, 410 to 430, 449 to 469, 505 to 525, 527 to 547, and 554 to 574; these read LLFIPTLGILIALMGILCDFL, IVFVGYSVFFALISVCCISFI, VLGFKTLVSKIVGMVCASAAG, FMHASAIISQMLMNLKVFGAI, ALTSGVVANFGAPIGGLLFAI, VMGNLWKGFLCATTTAIIFFL, LITFVGIGIITGLIGAFFVFI, IILVLVVSLFSAIITYSAGPL, LLVFIVVKLILTAFNIVLPIP, GAITPFIVTGAALGRLFGEIL, and QAIEPAGFAAIASAGLVSGTI. A CBS 1 domain is found at 644–705; that stretch reads MKKNINYLSM…LDIHIENIEQ (62 aa). Disordered stretches follow at residues 715-767, 802-822, and 846-872; these read FVNN…NSEN, IKPNQDESSSNSNGGSSSDFE, and DENSSLGEKPIIEHDDEDDDEEEGDGI. Low complexity-rich tracts occupy residues 717-764 and 809-822; these read NNNN…NSNN and SSSNSNGGSSSDFE. Positions 859–870 are enriched in acidic residues; it reads HDDEDDDEEEGD. Positions 944 to 994 constitute a CBS 2 domain; sequence MDLAPSQVPDLTPLNKVFHLFTMLGLGFTYVTSLGKLVGVITKNSLMEQDL.

This sequence belongs to the chloride channel (TC 2.A.49) family.

The protein resides in the membrane. In terms of biological role, voltage-gated chloride channel. Chloride channels may have several functions including the regulation of cell volume, membrane potential stabilization and signal transduction. In Dictyostelium discoideum (Social amoeba), this protein is Chloride channel protein E (clcE).